Consider the following 126-residue polypeptide: MAITKEDILNAVAEMSVMDVCDLVKMMEDKFGVSAAAATVAVAAGPVAGPAEAAEEKTEFDVVLVDAGSNKIAAIKAVRGATGLGLKEAKDAVEGTPFTVKEAASKEEAEALKKQLEEAGAKVELK.

This sequence belongs to the bacterial ribosomal protein bL12 family. Homodimer. Part of the ribosomal stalk of the 50S ribosomal subunit. Forms a multimeric L10(L12)X complex, where L10 forms an elongated spine to which 2 to 4 L12 dimers bind in a sequential fashion. Binds GTP-bound translation factors.

Forms part of the ribosomal stalk which helps the ribosome interact with GTP-bound translation factors. Is thus essential for accurate translation. The sequence is that of Large ribosomal subunit protein bL12 from Francisella tularensis subsp. mediasiatica (strain FSC147).